Here is a 142-residue protein sequence, read N- to C-terminus: Large ribosomal subunit protein uL11 (142 aa).

This sequence belongs to the universal ribosomal protein uL11 family. As to quaternary structure, part of the ribosomal stalk of the 50S ribosomal subunit. Interacts with L10 and the large rRNA to form the base of the stalk. L10 forms an elongated spine to which L12 dimers bind in a sequential fashion forming a multimeric L10(L12)X complex. Post-translationally, one or more lysine residues are methylated.

In terms of biological role, forms part of the ribosomal stalk which helps the ribosome interact with GTP-bound translation factors. This chain is Large ribosomal subunit protein uL11, found in Hydrogenovibrio crunogenus (strain DSM 25203 / XCL-2) (Thiomicrospira crunogena).